Here is a 1449-residue protein sequence, read N- to C-terminus: Gag-Pol polyprotein (1449 aa).

G2 carries the N-myristoyl glycine; by host lipid modification. The Nuclear export signal motif lies at 16–22; that stretch reads LEKIRLR. The Nuclear localization signal signature appears at 26-32; that stretch reads KKRYQLK. 2 CCHC-type zinc fingers span residues 392-409 and 413-430; these read IKCWNCGKEGHSARQCRA and QGCWKCGKAGHVMAKCPE. Residues 442 to 494 are disordered; sequence GKEAPQFPHGPDASGADTNCSPRGSSCGSTEELHEDGQKAEGEQRETLQGGNG. Over residues 457–470 the composition is skewed to polar residues; it reads ADTNCSPRGSSCGS. Basic and acidic residues predominate over residues 472–487; it reads EELHEDGQKAEGEQRE. The Peptidase A2 domain maps to 518 to 587; sequence VEVLLDTGAD…TPINIFGRNL (70 aa). D523 (for protease activity; shared with dimeric partner) is an active-site residue. The 191-residue stretch at 641 to 831 folds into the Reverse transcriptase domain; the sequence is DGQLEEAPPT…PPFQWMGYEL (191 aa). Mg(2+) is bound by residues D707, D782, and D783. Residues 824–832 are RT 'primer grip'; it reads FQWMGYELW. Residues 994 to 1010 carry the Tryptophan repeat motif motif; sequence WEQWWTDYWQVTWIPEW. Residues 1030-1153 enclose the RNase H type-1 domain; sequence IQGAETFYVD…VDHLVSQGIR (124 aa). Residues D1039, E1074, D1094, and D1145 each coordinate Mg(2+). The Integrase-type zinc finger occupies 1159 to 1200; the sequence is EKIEPAQEEHEKYHSNVKELVFKFGLPRLVAKQIVDTCDKCH. Residues H1168, H1172, C1196, and C1199 each coordinate Zn(2+). The Integrase catalytic domain maps to 1210-1360; the sequence is VNAELGTWQM…TPAERLVNMI (151 aa). Positions 1220 and 1272 each coordinate Mg(2+). Positions 1379-1426 form a DNA-binding region, integrase-type; the sequence is FRVYYREGRDQLWKGPGELLWKGEGAVILKVGTEIKVVPRRKAKIIKD.

In terms of assembly, homotrimer. Interacts with gp41 (via C-terminus). Homodimer. The active site consists of two apposed aspartic acid residues. As to quaternary structure, heterodimer of p66 RT and p51 RT (RT p66/p51). Heterodimerization of RT is essential for DNA polymerase activity. Despite the sequence identities, p66 RT and p51 RT have distinct folding. In terms of assembly, homotetramer; may further associate as a homohexadecamer. Mg(2+) serves as cofactor. Post-translationally, specific enzymatic cleavages by the viral protease yield mature proteins. The protease is released by autocatalytic cleavage. The polyprotein is cleaved during and after budding, this process is termed maturation. Proteolytic cleavage of p66 RT removes the RNase H domain to yield the p51 RT subunit. Capsid protein p24 is phosphorylated.

The protein resides in the virion. Its subcellular location is the host nucleus. It localises to the host cytoplasm. The protein localises to the host cell membrane. The catalysed reaction is Specific for a P1 residue that is hydrophobic, and P1' variable, but often Pro.. It catalyses the reaction Endohydrolysis of RNA in RNA/DNA hybrids. Three different cleavage modes: 1. sequence-specific internal cleavage of RNA. Human immunodeficiency virus type 1 and Moloney murine leukemia virus enzymes prefer to cleave the RNA strand one nucleotide away from the RNA-DNA junction. 2. RNA 5'-end directed cleavage 13-19 nucleotides from the RNA end. 3. DNA 3'-end directed cleavage 15-20 nucleotides away from the primer terminus.. It carries out the reaction 3'-end directed exonucleolytic cleavage of viral RNA-DNA hybrid.. The enzyme catalyses DNA(n) + a 2'-deoxyribonucleoside 5'-triphosphate = DNA(n+1) + diphosphate. Its activity is regulated as follows. The viral protease is inhibited by many synthetic protease inhibitors (PIs), such as amprenavir, atazanavir, indinavir, loprinavir, nelfinavir, ritonavir and saquinavir. RT can be inhibited either by nucleoside RT inhibitors (NRTIs) or by non nucleoside RT inhibitors (NNRTIs). NRTIs act as chain terminators, whereas NNRTIs inhibit DNA polymerization by binding a small hydrophobic pocket near the RT active site and inducing an allosteric change in this region. Classical NRTIs are abacavir, adefovir (PMEA), didanosine (ddI), lamivudine (3TC), stavudine (d4T), tenofovir (PMPA), zalcitabine (ddC), and zidovudine (AZT). Classical NNRTIs are atevirdine (BHAP U-87201E), delavirdine, efavirenz (DMP-266), emivirine (I-EBU), and nevirapine (BI-RG-587). The tritherapies used as a basic effective treatment of AIDS associate two NRTIs and one NNRTI. Use of protease inhibitors in tritherapy regimens permit more ambitious therapeutic strategies. In terms of biological role, gag-Pol polyprotein and Gag polyprotein may regulate their own translation, by the binding genomic RNA in the 5'-UTR. At low concentration, Gag-Pol and Gag would promote translation, whereas at high concentration, the polyproteins encapsidate genomic RNA and then shut off translation. Matrix protein p17 has two main functions: in infected cell, it targets Gag and Gag-pol polyproteins to the plasma membrane via a multipartite membrane-binding signal, that includes its myristointegration complex. The myristoylation signal and the NLS exert conflicting influences its subcellular localization. The key regulation of these motifs might be phosphorylation of a portion of MA molecules on the C-terminal tyrosine at the time of virus maturation, by virion-associated cellular tyrosine kinase. Implicated in the release from host cell mediated by Vpu. Functionally, capsid protein p24 forms the conical core that encapsulates the genomic RNA-nucleocapsid complex in the virion. The core is constituted by capsid protein hexamer subunits. The core is disassembled soon after virion entry. Interaction with host PPIA/CYPA protects the virus from restriction by host TRIM5-alpha and from an unknown antiviral activity in host cells. This capsid restriction by TRIM5 is one of the factors which restricts SIV to the simian species. Its function is as follows. Nucleocapsid protein p7 encapsulates and protects viral dimeric unspliced (genomic) RNA. Binds these RNAs through its zinc fingers. Facilitates rearangement of nucleic acid secondary structure during retrotranscription of genomic RNA. This capability is referred to as nucleic acid chaperone activity. In terms of biological role, the aspartyl protease mediates proteolytic cleavages of Gag and Gag-Pol polyproteins during or shortly after the release of the virion from the plasma membrane. Cleavages take place as an ordered, step-wise cascade to yield mature proteins. This process is called maturation. Displays maximal activity during the budding process just prior to particle release from the cell. Also cleaves Nef and Vif, probably concomitantly with viral structural proteins on maturation of virus particles. Hydrolyzes host EIF4GI and PABP1 in order to shut off the capped cellular mRNA translation. The resulting inhibition of cellular protein synthesis serves to ensure maximal viral gene expression and to evade host immune response. Reverse transcriptase/ribonuclease H (RT) is a multifunctional enzyme that converts the viral dimeric RNA genome into dsDNA in the cytoplasm, shortly after virus entry into the cell. This enzyme displays a DNA polymerase activity that can copy either DNA or RNA templates, and a ribonuclease H (RNase H) activity that cleaves the RNA strand of RNA-DNA heteroduplexes in a partially processive 3' to 5' endonucleasic mode. Conversion of viral genomic RNA into dsDNA requires many steps. A tRNA binds to the primer-binding site (PBS) situated at the 5'-end of the viral RNA. RT uses the 3' end of the tRNA primer to perform a short round of RNA-dependent minus-strand DNA synthesis. The reading proceeds through the U5 region and ends after the repeated (R) region which is present at both ends of viral RNA. The portion of the RNA-DNA heteroduplex is digested by the RNase H, resulting in a ssDNA product attached to the tRNA primer. This ssDNA/tRNA hybridizes with the identical R region situated at the 3' end of viral RNA. This template exchange, known as minus-strand DNA strong stop transfer, can be either intra- or intermolecular. RT uses the 3' end of this newly synthesized short ssDNA to perform the RNA-dependent minus-strand DNA synthesis of the whole template. RNase H digests the RNA template except for two polypurine tracts (PPTs) situated at the 5'-end and near the center of the genome. It is not clear if both polymerase and RNase H activities are simultaneous. RNase H can probably proceed both in a polymerase-dependent (RNA cut into small fragments by the same RT performing DNA synthesis) and a polymerase-independent mode (cleavage of remaining RNA fragments by free RTs). Secondly, RT performs DNA-directed plus-strand DNA synthesis using the PPTs that have not been removed by RNase H as primers. PPTs and tRNA primers are then removed by RNase H. The 3' and 5' ssDNA PBS regions hybridize to form a circular dsDNA intermediate. Strand displacement synthesis by RT to the PBS and PPT ends produces a blunt ended, linear dsDNA copy of the viral genome that includes long terminal repeats (LTRs) at both ends. Functionally, integrase catalyzes viral DNA integration into the host chromosome, by performing a series of DNA cutting and joining reactions. This enzyme activity takes place after virion entry into a cell and reverse transcription of the RNA genome in dsDNA. The first step in the integration process is 3' processing. This step requires a complex comprising the viral genome, matrix protein, Vpr and integrase. This complex is called the pre-integration complex (PIC). The integrase protein removes 2 nucleotides from each 3' end of the viral DNA, leaving recessed CA OH's at the 3' ends. In the second step, the PIC enters cell nucleus. This process is mediated through integrase and Vpr proteins, and allows the virus to infect a non dividing cell. This ability to enter the nucleus is specific of lentiviruses, other retroviruses cannot and rely on cell division to access cell chromosomes. In the third step, termed strand transfer, the integrase protein joins the previously processed 3' ends to the 5' ends of strands of target cellular DNA at the site of integration. The 5'-ends are produced by integrase-catalyzed staggered cuts, 5 bp apart. A Y-shaped, gapped, recombination intermediate results, with the 5'-ends of the viral DNA strands and the 3' ends of target DNA strands remaining unjoined, flanking a gap of 5 bp. The last step is viral DNA integration into host chromosome. This involves host DNA repair synthesis in which the 5 bp gaps between the unjoined strands are filled in and then ligated. Since this process occurs at both cuts flanking the SIV genome, a 5 bp duplication of host DNA is produced at the ends of SIV integration. Alternatively, Integrase may catalyze the excision of viral DNA just after strand transfer, this is termed disintegration. The protein is Gag-Pol polyprotein (gag-pol) of Cercopithecidae (Old World monkeys).